A 119-amino-acid chain; its full sequence is Large ribosomal subunit protein bL19 (119 aa).

The protein belongs to the bacterial ribosomal protein bL19 family.

This protein is located at the 30S-50S ribosomal subunit interface and may play a role in the structure and function of the aminoacyl-tRNA binding site. In Mycoplasma pneumoniae (strain ATCC 29342 / M129 / Subtype 1) (Mycoplasmoides pneumoniae), this protein is Large ribosomal subunit protein bL19 (rplS).